A 56-amino-acid chain; its full sequence is Attractin (56 aa).

3 disulfide bridges follow: cysteine 4–cysteine 41, cysteine 13–cysteine 33, and cysteine 20–cysteine 26.

Produced by the albumen gland of the egg cordons.

It is found in the secreted. In terms of biological role, water-borne pheromone that attract the marine mollusk Aplysia into breeding aggregations and coordinate male and female reproductive behavior within the aggregation. In Aplysia vaccaria (California black sea hare), this protein is Attractin (ATT).